Reading from the N-terminus, the 120-residue chain is Fluoride-specific ion channel FluC (120 aa).

Helical transmembrane passes span Phe30–Leu50, Val66–Leu86, and Leu96–Val116. The Na(+) site is built by Gly70 and Thr73.

This sequence belongs to the fluoride channel Fluc/FEX (TC 1.A.43) family.

It is found in the cell inner membrane. The enzyme catalyses fluoride(in) = fluoride(out). Its activity is regulated as follows. Na(+) is not transported, but it plays an essential structural role and its presence is essential for fluoride channel function. Fluoride-specific ion channel. Important for reducing fluoride concentration in the cell, thus reducing its toxicity. The polypeptide is Fluoride-specific ion channel FluC (Pseudoalteromonas translucida (strain TAC 125)).